We begin with the raw amino-acid sequence, 292 residues long: Probable septum site-determining protein MinC (292 aa).

Positions Gln-109–Thr-188 are disordered. Residues Gln-140–Asp-150 are compositionally biased toward acidic residues. Over residues Ala-171–Leu-185 the composition is skewed to polar residues.

Belongs to the MinC family. Interacts with MinD and FtsZ.

Its function is as follows. Cell division inhibitor that blocks the formation of polar Z ring septums. Rapidly oscillates between the poles of the cell to destabilize FtsZ filaments that have formed before they mature into polar Z rings. Prevents FtsZ polymerization. The chain is Probable septum site-determining protein MinC from Bordetella pertussis (strain Tohama I / ATCC BAA-589 / NCTC 13251).